The primary structure comprises 104 residues: Cytochrome c-552 (104 aa).

A signal peptide spans 1 to 23 (MHLHLRGICLVLAVASSSSSALA). Positions 37, 40, 41, and 82 each coordinate heme c.

The protein belongs to the cytochrome c family. In terms of assembly, monoheme monomer. Has the tendency to dimerize. Binds 1 heme c group covalently per subunit.

The protein resides in the periplasm. This chain is Cytochrome c-552 (cycB), found in Bradyrhizobium diazoefficiens (strain JCM 10833 / BCRC 13528 / IAM 13628 / NBRC 14792 / USDA 110).